The primary structure comprises 106 residues: UPF0145 protein VC_A0951 (106 aa).

This sequence belongs to the UPF0145 family.

The sequence is that of UPF0145 protein VC_A0951 from Vibrio cholerae serotype O1 (strain ATCC 39315 / El Tor Inaba N16961).